The following is a 367-amino-acid chain: MASPCLIAVLVFLCAIVSCYSDNPIDSCWRGDSNWDQNRMKLADCAVGFGSSTMGGKGGDFYTVTSTDDNPVNPTPGTLRYGATREKALWIIFSQNMNIKLKMPLYVAGHKTIDGRGADVHLGNGGPCLFMRKVSHVILHSLHIHGCNTSVLGDVLVSESIGVEPVHAQDGDAITMRNVTNAWIDHNSLSDCSDGLIDVTLGSTGITISNNHFFNHHKVMLLGHDDTYDDDKSMKVTVAFNQFGPNAGQRMPRARYGLVHVANNNYDPWNIYAIGGSSNPTILSEGNSFTAPSESYKKEVTKRIGCESPSACANWVWRSTRDAFINGAYFVSSGKTEETNIYNSNEAFKVENGNAAPQLTKNAGVVT.

The first 21 residues, 1 to 21 (MASPCLIAVLVFLCAIVSCYS), serve as a signal peptide directing secretion. The cysteines at positions 28 and 45 are disulfide-linked. Residues 38-305 (NRMKLADCAV…YKKEVTKRIG (268 aa)) are beta-helix. The tract at residues 92–104 (IFSQNMNIKLKMP) is igE-binding. Binds to IgE in 5 out of 7 patients tested. The cysteines at positions 128 and 147 are disulfide-linked. N-linked (GlcNAc...) asparagine glycosylation is present at asparagine 148. Ca(2+) is bound at residue aspartate 170. N-linked (GlcNAc...) asparagine glycosylation is present at asparagine 178. Aspartate 194 and aspartate 198 together coordinate Ca(2+). Residues 239–250 (AFNQFGPNAGQR) are igE-binding. Binds to IgE in 6 out of 7 patients tested. Arginine 250 is a catalytic residue. Residues 251–258 (MPRARYGL) are igE-binding. Binds to IgE in 5 out of 7 patients tested. Cysteine 306 and cysteine 312 are joined by a disulfide. The tract at residues 317-327 (WRSTRDAFING) is igE-binding. Binds to IgE in 3 out of 7 patients tested.

Belongs to the polysaccharide lyase 1 family. Amb a subfamily. The cofactor is Ca(2+). N-glycosylated; consists of complex-type N-glycans containing the Lewis a antigen (Galbeta1-3(Fucalpha1-4)GlcNAcbeta1-). As to expression, expressed in pollen (at protein level).

It carries out the reaction Eliminative cleavage of (1-&gt;4)-alpha-D-galacturonan to give oligosaccharides with 4-deoxy-alpha-D-galact-4-enuronosyl groups at their non-reducing ends.. It functions in the pathway glycan metabolism; pectin degradation; 2-dehydro-3-deoxy-D-gluconate from pectin: step 2/5. Functionally, has low pectate lyase activity. This Juniperus ashei (Ozark white cedar) protein is Pectate lyase 1.